The sequence spans 139 residues: Ribosome-binding factor A (139 aa).

Residues 120–139 form a disordered region; that stretch reads PENLLAVEDNTDEDDESFSE. The segment covering 128–139 has biased composition (acidic residues); sequence DNTDEDDESFSE.

The protein belongs to the RbfA family. As to quaternary structure, monomer. Binds 30S ribosomal subunits, but not 50S ribosomal subunits or 70S ribosomes.

Its subcellular location is the cytoplasm. Functionally, one of several proteins that assist in the late maturation steps of the functional core of the 30S ribosomal subunit. Associates with free 30S ribosomal subunits (but not with 30S subunits that are part of 70S ribosomes or polysomes). Required for efficient processing of 16S rRNA. May interact with the 5'-terminal helix region of 16S rRNA. In Nostoc punctiforme (strain ATCC 29133 / PCC 73102), this protein is Ribosome-binding factor A.